The following is a 617-amino-acid chain: MTLTSASTVVGGLDANAPQTISGAAALMDALRRHGVDTIFGYPGGAILPIYDALHIAESEGWVKHILVRHEQAGTHAADAYARATGKVGVCFGTSGPGATNLVTGIATAQMDSVPMVVITGQVPRPAIGTDAFQETDIFGITLPIVKHSWVVRDPADLGSIVAQAFLIAASGRPGPVLIDIPKDVGQEQFNYVPVEPGSVIPGGFHQPEPPLDAAVAAALDLIEQAQRPLLYVGGGAISACAHDSLRMLAERYQLPVTTTLMGKGAFDENDALSVGMLGMHGTAYANFAVTECDLLIAVGARFDDRVTGKLDTFAPRARVVHFEIDPAEIGKNRKADVAVLGDLGLSLARMVEISLQRTAEPRTAAWLERINTWKDRYPLTIPPAEGAIYPQEVLLAVRDLAPDAIVTTDVGQHQMWAAQHLRNGPRGWISSAGLGTMGFGMPAAMGAQVAMPDRQVVCIAGDASILMNIQELGTLAAYGLPVKVVIVNNHWQGMVRQWQESFYDERYSASDMLNGMPDFIALARSFGVDGVKITDRELLHRDLAAALQSPTPTMIDVHVRRGENCYPMVPPGKSNAQMVGLPSHPELAMGTTRTCSSCGAITAHEHRFCPQCGASL.

E71 serves as a coordination point for thiamine diphosphate. Residues R173, H281 to R302, and E324 to D343 each bind FAD. The tract at residues Q413–W492 is thiamine pyrophosphate binding. The Mg(2+) site is built by D463 and N490.

This sequence belongs to the TPP enzyme family. In terms of assembly, dimer of large and small chains. It depends on Mg(2+) as a cofactor. Thiamine diphosphate is required as a cofactor.

The enzyme catalyses 2 pyruvate + H(+) = (2S)-2-acetolactate + CO2. It participates in amino-acid biosynthesis; L-isoleucine biosynthesis; L-isoleucine from 2-oxobutanoate: step 1/4. Its pathway is amino-acid biosynthesis; L-valine biosynthesis; L-valine from pyruvate: step 1/4. This is Acetolactate synthase large subunit (ilvB) from Parasynechococcus marenigrum (strain WH8102).